A 335-amino-acid polypeptide reads, in one-letter code: Protein MET1, chloroplastic (335 aa).

The segment covering Met1–Pro18 has biased composition (low complexity). 2 disordered regions span residues Met1 to Leu29 and Ser66 to Thr88. A chloroplast-targeting transit peptide spans Met1 to Lys73. Polar residues predominate over residues Arg19 to Leu29. Positions Gly78–Thr88 are enriched in acidic residues. One can recognise a PDZ domain in the interval Tyr97 to Ser136. TPR repeat units lie at residues Arg217 to Pro250, Ser254 to Asp287, and Lys289 to Ile323.

In terms of assembly, interacts directly with stromal loops of photosystem II (PSII) core components psbB (CP47) and psbC (CP43). Associates with PSII subcomplexes formed during the PSII repair cycle (e.g. PSII dimers, PSII monomers, CP43-less PSII monomerand PSII reaction centers). Post-translationally, phosphorylated rapidly (e.g. within 5 minutes) but transiently at threonine and serine residues after wounding. As to expression, expressed in leaves (at protein level). Mostly expressed in leaves, stems and siliques, and, to a lower extent, in flowers and senescent leaves, but not present in roots (at protein level).

The protein localises to the plastid. The protein resides in the chloroplast membrane. It is found in the chloroplast thylakoid membrane. Its function is as follows. Involved in photosystem II supercomplex formation and repair, probably acting as a psbB/psbC chaperone on the stromal side of the membrane. This Arabidopsis thaliana (Mouse-ear cress) protein is Protein MET1, chloroplastic.